We begin with the raw amino-acid sequence, 142 residues long: NADH-quinone oxidoreductase subunit A (142 aa).

Helical transmembrane passes span 8–28 (FGTVFVFLLLGIIFVVGGYLT), 63–83 (FYVVALIFIIFDVEVVFLFPW), and 93–113 (FALIEALVFAGILVIGLVYAW).

It belongs to the complex I subunit 3 family. In terms of assembly, NDH-1 is composed of 14 different subunits. Subunits NuoA, H, J, K, L, M, N constitute the membrane sector of the complex.

It localises to the cell inner membrane. The catalysed reaction is a quinone + NADH + 5 H(+)(in) = a quinol + NAD(+) + 4 H(+)(out). Functionally, NDH-1 shuttles electrons from NADH, via FMN and iron-sulfur (Fe-S) centers, to quinones in the respiratory chain. The immediate electron acceptor for the enzyme in this species is believed to be a menaquinone. Couples the redox reaction to proton translocation (for every two electrons transferred, four hydrogen ions are translocated across the cytoplasmic membrane), and thus conserves the redox energy in a proton gradient. The chain is NADH-quinone oxidoreductase subunit A from Chlorobium phaeobacteroides (strain BS1).